The following is a 494-amino-acid chain: Probable cytosol aminopeptidase (494 aa).

2 residues coordinate Mn(2+): lysine 260 and aspartate 265. Lysine 272 is an active-site residue. Residues aspartate 283, aspartate 342, and glutamate 344 each coordinate Mn(2+). Arginine 346 is an active-site residue.

Belongs to the peptidase M17 family. The cofactor is Mn(2+).

Its subcellular location is the cytoplasm. The enzyme catalyses Release of an N-terminal amino acid, Xaa-|-Yaa-, in which Xaa is preferably Leu, but may be other amino acids including Pro although not Arg or Lys, and Yaa may be Pro. Amino acid amides and methyl esters are also readily hydrolyzed, but rates on arylamides are exceedingly low.. It carries out the reaction Release of an N-terminal amino acid, preferentially leucine, but not glutamic or aspartic acids.. In terms of biological role, presumably involved in the processing and regular turnover of intracellular proteins. Catalyzes the removal of unsubstituted N-terminal amino acids from various peptides. The protein is Probable cytosol aminopeptidase of Bacillus thuringiensis subsp. konkukian (strain 97-27).